The chain runs to 365 residues: tRNA-specific 2-thiouridylase MnmA (365 aa).

ATP is bound by residues 6–13 and Leu32; that span reads AMSGGVDS. Residue Cys101 is the Nucleophile of the active site. Residues Cys101 and Cys199 are joined by a disulfide bond. ATP is bound at residue Gly125. The interval 149–151 is interaction with tRNA; sequence KDQ. Cys199 acts as the Cysteine persulfide intermediate in catalysis.

Belongs to the MnmA/TRMU family.

The protein localises to the cytoplasm. The enzyme catalyses S-sulfanyl-L-cysteinyl-[protein] + uridine(34) in tRNA + AH2 + ATP = 2-thiouridine(34) in tRNA + L-cysteinyl-[protein] + A + AMP + diphosphate + H(+). Catalyzes the 2-thiolation of uridine at the wobble position (U34) of tRNA, leading to the formation of s(2)U34. The sequence is that of tRNA-specific 2-thiouridylase MnmA from Corynebacterium glutamicum (strain R).